Here is a 479-residue protein sequence, read N- to C-terminus: 3-phytase B (479 aa).

An N-terminal signal peptide occupies residues 1 to 19 (MPRTSLLTLACALATGASA). Catalysis depends on histidine 82, which acts as the Nucleophile. Asparagine 106, asparagine 191, asparagine 227, asparagine 250, and asparagine 315 each carry an N-linked (GlcNAc...) asparagine glycan. Catalysis depends on aspartate 338, which acts as the Proton donor. Residues asparagine 425, asparagine 442, and asparagine 458 are each glycosylated (N-linked (GlcNAc...) asparagine).

The protein belongs to the histidine acid phosphatase family.

It catalyses the reaction 1D-myo-inositol hexakisphosphate + H2O = 1D-myo-inositol 1,2,4,5,6-pentakisphosphate + phosphate. Catalyzes the hydrolysis of inorganic orthophosphate from phytate. The sequence is that of 3-phytase B (phyB) from Aspergillus niger.